The primary structure comprises 421 residues: Mannose-1-phosphate guanyltransferase alpha-A (421 aa).

Belongs to the transferase hexapeptide repeat family.

It catalyses the reaction alpha-D-mannose 1-phosphate + GTP + H(+) = GDP-alpha-D-mannose + diphosphate. Its pathway is nucleotide-sugar biosynthesis; GDP-alpha-D-mannose biosynthesis; GDP-alpha-D-mannose from alpha-D-mannose 1-phosphate (GTP route): step 1/1. This chain is Mannose-1-phosphate guanyltransferase alpha-A (gmppa-a), found in Xenopus laevis (African clawed frog).